The following is a 150-amino-acid chain: Ribonuclease pancreatic delta-type (150 aa).

The N-terminal stretch at 1-25 (MGLEKSLILFSLLVLVLGWVQPSLG) is a signal peptide. Arg-35 serves as a coordination point for substrate. His-37 serves as the catalytic Proton acceptor. Intrachain disulfides connect Cys-51-Cys-110, Cys-65-Cys-121, Cys-83-Cys-136, and Cys-90-Cys-98. Substrate-binding positions include 66–70 (KRVNT), Lys-91, and Arg-111. His-145 acts as the Proton donor in catalysis.

The protein belongs to the pancreatic ribonuclease family. As to quaternary structure, monomer.

Its subcellular location is the secreted. It catalyses the reaction an [RNA] containing cytidine + H2O = an [RNA]-3'-cytidine-3'-phosphate + a 5'-hydroxy-ribonucleotide-3'-[RNA].. It carries out the reaction an [RNA] containing uridine + H2O = an [RNA]-3'-uridine-3'-phosphate + a 5'-hydroxy-ribonucleotide-3'-[RNA].. Endonuclease that catalyzes the cleavage of RNA on the 3' side of pyrimidine nucleotides. Acts on single-stranded and double-stranded RNA. This chain is Ribonuclease pancreatic delta-type, found in Rattus exulans (Polynesian rat).